Reading from the N-terminus, the 204-residue chain is Rho GDP-dissociation inhibitor 1 (204 aa).

A disordered region spans residues 1-36; sequence MAEQEPTAEQLAQIAAENEEDEHSVNYKPPAQKSIQ. Ala2 is subject to N-acetylalanine. A Phosphoserine modification is found at Ser34. Lys43 is modified (N6-acetyllysine). The residue at position 47 (Ser47) is a Phosphoserine. N6-acetyllysine is present on residues Lys105 and Lys127. Glycyl lysine isopeptide (Lys-Gly) (interchain with G-Cter in SUMO1); alternate cross-links involve residues Lys138 and Lys141. Glycyl lysine isopeptide (Lys-Gly) (interchain with G-Cter in SUMO2); alternate cross-links involve residues Lys138 and Lys141. Residue Lys141 is modified to N6-acetyllysine; alternate. Lys141 is subject to N6-succinyllysine; alternate. Lys178 is subject to N6-acetyllysine.

This sequence belongs to the Rho GDI family. In terms of assembly, monomer. Interacts with FER. Interacts with PLXNB3. Forms a heterodimer with RAC1. Interacts with RHOA, the affinity is increased by three orders of magnitude when RHOA is prenylated. Interacts with PSMD10; the interaction increases ARHGDIA association with RHOA, leading to ARHGDIA-mediated inactivation of RHOA and ROCK and prolonged AKT activation. Interacts with KANK2; the interaction is direct and may regulate the interaction of ARHGDIA with RHOA, RAC1 and CDC42. Interacts with RHOC. Interacts with CDC42. Interacts with NGFR (via death domain); NGFR binding decreases the affinity for RHOA. In kidney glomerulus, expressed in podocytes and mesangial cells.

It is found in the cytoplasm. Functionally, controls Rho proteins homeostasis. Regulates the GDP/GTP exchange reaction of the Rho proteins by inhibiting the dissociation of GDP from them, and the subsequent binding of GTP to them. Retains Rho proteins such as CDC42, RAC1 and RHOA in an inactive cytosolic pool, regulating their stability and protecting them from degradation. Actively involved in the recycling and distribution of activated Rho GTPases in the cell, mediates extraction from membranes of both inactive and activated molecules due its exceptionally high affinity for prenylated forms. Through the modulation of Rho proteins, may play a role in cell motility regulation. In glioma cells, inhibits cell migration and invasion by mediating the signals of SEMA5A and PLXNB3 that lead to inactivation of RAC1. This Mus musculus (Mouse) protein is Rho GDP-dissociation inhibitor 1 (Arhgdia).